The chain runs to 68 residues: Conotoxin Em11.5 (68 aa).

A signal peptide spans 1–26 (MMFRLTSVGCFLLVIACLNLFQVVLT). Intrachain disulfides connect C29/C43, C36/C48, C42/C52, and C47/C56. The residue at position 60 (F60) is a Phenylalanine amide. The propeptide occupies 64-68 (ATFQE).

Belongs to the conotoxin I2 superfamily. In terms of tissue distribution, expressed by the venom duct.

It localises to the secreted. The protein is Conotoxin Em11.5 of Conus emaciatus (False virgin cone).